The following is a 367-amino-acid chain: Protein valois (367 aa).

3 WD repeats span residues 101–139, 152–192, and 198–238; these read QAEHTVNIVRYAEDDFLLVALGDTRLQAWSTYSKVRDSQ, AHPT…MVST, and SHTD…PSST. The interaction with csul stretch occupies residues 309–367; that stretch reads LAAMSNLPASVKVANVQAGHEFIYTHQDTHSRLTDAVWTDDSTLITIGHGRKMVTHAIK.

In terms of assembly, interacts with csul and tud. As to expression, in oocytes, localizes to pole plasm and nuage (at protein level). Expressed stronger in the germline than in somatic cells. In the germarium it sometimes concentrates in perinuclear aggregates that disappear by stage 2 of oogenesis. At later stages, it is uniformly distributed in the nurse cells and oocyte, as well as in young embryos, with no particular enrichment at the posterior or inside the pole cells (at protein level).

The protein resides in the cytoplasm. Functionally, involved in specific localization of cytoplasmic proteins during the formation of pole plasm. Required for synthesis and/or stability of oskar protein (osk) and localization of tudor (tud) in both the nuage and posterior pole of the oocyte. Required for normal posterior localization of osk in later stages of oogenesis and for posterior localization of the vasa (vas) protein during the entire process of pole plasm assembly. May act by regulating the complex that contains the arginine N-methyltransferase csul. This Drosophila melanogaster (Fruit fly) protein is Protein valois (vls).